The sequence spans 211 residues: Probable GTP-binding protein EngB (211 aa).

In terms of domain architecture, EngB-type G spans 30-204 (EGFEVAFAGR…YTVLADWMEL (175 aa)). Residues 38–45 (GRSNAGKS), 64–68 (GRTQL), 82–85 (DLPG), 149–152 (TKAD), and 182–185 (LFSA) contribute to the GTP site. Residues S45 and T66 each coordinate Mg(2+).

This sequence belongs to the TRAFAC class TrmE-Era-EngA-EngB-Septin-like GTPase superfamily. EngB GTPase family. It depends on Mg(2+) as a cofactor.

In terms of biological role, necessary for normal cell division and for the maintenance of normal septation. The sequence is that of Probable GTP-binding protein EngB from Pseudomonas savastanoi pv. phaseolicola (strain 1448A / Race 6) (Pseudomonas syringae pv. phaseolicola (strain 1448A / Race 6)).